A 349-amino-acid polypeptide reads, in one-letter code: Micronemal protein 6 (349 aa).

Residues 1–23 (MRLFRCCAAAVVAAESLLWLKNG) form the signal peptide. EGF-like domains follow at residues 36–80 (IADN…VTCM), 96–134 (TPAACSSNPCGPEAAGTCKETNSGYICRCNQGYRISLDG), and 147–192 (GCEE…ITCK). 9 disulfide bridges follow: Cys40–Cys53, Cys45–Cys62, Cys64–Cys79, Cys100–Cys113, Cys105–Cys122, Cys124–Cys140, Cys148–Cys162, Cys153–Cys173, and Cys175–Cys191. The disordered stretch occupies residues 194–291 (VPPHYRKPPF…EEGSGHAGAI (98 aa)). Residues 204-283 (EFGKGGHPVD…SEEQGKEREE (80 aa)) form an acidic domain region. Basic and acidic residues-rich tracts occupy residues 210–247 (HPVDSEPSKRQREDEGESREPESDSTEPGRDQERRTPL) and 276–285 (EQGKEREEGS). A helical membrane pass occupies residues 290-310 (AIAGGVIGGLLLLSAAGAGVA).

As to quaternary structure, interacts directly with MIC1. Part of the MIC6-MIC1-MIC4 complex. Post-translationally, subject to proteolytic processing involving both the N-terminus and the C-terminus. The first EGF-like domain (EGF-like domain 1) is removed by proteolytic cleavage by ASP3 and is not present in the mature protein. Released as soluble 35 kDa protein after proteolytic processing at the C-terminus.

It localises to the cytoplasmic vesicle. Its subcellular location is the secretory vesicle. The protein resides in the microneme membrane. The protein localises to the secreted. In terms of biological role, escorter protein required for import of MIC1 and MIC4 adhesins into the microneme. The chain is Micronemal protein 6 from Toxoplasma gondii.